A 33-amino-acid chain; its full sequence is Photosystem II reaction center protein Psb30 (33 aa).

A helical transmembrane segment spans residues 8–28; that stretch reads QLGSLLLITVAGPLIVFFLFI.

This sequence belongs to the Psb30/Ycf12 family. PSII is composed of 1 copy each of membrane proteins PsbA, PsbB, PsbC, PsbD, PsbE, PsbF, PsbH, PsbI, PsbJ, PsbK, PsbL, PsbM, PsbT, PsbY, PsbZ, Psb30/Ycf12, peripheral proteins of the oxygen-evolving complex and a large number of cofactors. It forms dimeric complexes.

The protein localises to the plastid. Its subcellular location is the chloroplast thylakoid membrane. Functionally, a core subunit of photosystem II (PSII), probably helps stabilize the reaction center. The polypeptide is Photosystem II reaction center protein Psb30 (Euglena anabaena (Euglenaria anabaena)).